The primary structure comprises 755 residues: uncharacterized protein (755 aa).

Transmembrane regions (helical) follow at residues 46-66, 70-90, 93-113, 118-138, 143-163, 411-431, 446-466, 482-502, and 514-534; these read LGLGVGLASQLILLADMGGLY, LKTIFGAWVGAAIAMAVGTIV, GWGLGLAITGFVLFASGYLAV, GAMVGIVTTFAFLLGAQNVST, FTSLAIGGMWSLILAIFIWPF, IAHLTQIPYGFWIVITLIFVL, LLGTFLGVLVMSIALKLIQDP, ALLRFHYSVAVFFITAFALIL, and ALLSRLVCTLIGSAIALGLAF.

This sequence belongs to the YccS/YhfK family.

It localises to the cell membrane. This is an uncharacterized protein from Synechocystis sp. (strain ATCC 27184 / PCC 6803 / Kazusa).